A 56-amino-acid chain; its full sequence is Protein YqiD (56 aa).

Residues 2 to 22 (FIAWYWIVLIALVVVGYFLHL) form a helical membrane-spanning segment.

Its subcellular location is the cell inner membrane. The chain is Protein YqiD from Escherichia coli (strain K12).